The sequence spans 429 residues: SVP1-like protein 2 (429 aa).

4 WD repeats span residues 10 to 48 (PVLA…LRTS), 50 to 96 (DFGA…QVGV), 178 to 218 (AHTS…RLYE), and 223 to 262 (IDKA…GTRP). The interval 262–297 (PITSNGGTAYAAGEPSVTGNNRPSSPYSVASSSGGG) is disordered.

The protein belongs to the WD repeat PROPPIN family.

It is found in the vacuole membrane. The protein localises to the cytoplasmic vesicle membrane. In terms of biological role, involved in mitochondrial or peroxisomal functions and amino acid signaling pathways. This chain is SVP1-like protein 2 (apg-14), found in Neurospora crassa (strain ATCC 24698 / 74-OR23-1A / CBS 708.71 / DSM 1257 / FGSC 987).